A 670-amino-acid polypeptide reads, in one-letter code: MEEFRRSYSRLCRESGAEPQEAVLQQLHQLPRGRLDLATQSLTVETCRALGKLLPRETLCTELVLSDCMLSEEGATLLLRGLCANTVLRFLDLKGNNLRAAGAEALGKLLQQNKSIQSLTLEWNSLGTWDDAFATFCGGLAANGALQRLDLRNNQISHKGAEELALALKGNTTLQQLDLRWNNVGLLGGRALMNCLPSNRTLWRLDLAGNNIPGDVLRAVEQAMGHSQDRLTTFQENQARTHVLSKEVQHLREEKSKQFLDLMETIDKQREEMAKSSRASAARVGQLQEALNERHSIINALKAKLQMTEAALALSEQKAQDLGELLATAEQEQLSLSQRQAKELKLEQQEAAERESKLLRDLSAANEKNLLLQNQVDELERKFRCQQEQLFQTRQEMTSMSAELKMRAIQAEERLDMEKRRCRQSLEDSESLRIKEVEHMTRHLEESEKAMQERVQRLEAARLSLEEELSRVKAAALSERGQAEEELIKAKSQARLEEQQRLAHLEDKLRLLAQARDEAQGACLQQKQVVAEAQTRVSQLGLQVEGLRRRLEELQQELSLKDQERVAEVSRVRVELQEQNGRLQAELAAQEALREKAAALERQLKVMASDHREALLDRESENASLREKLRLREAEIARIRDEEAQRASFLQNAVLAYVQASPVRTLSPPK.

LRR repeat units follow at residues 58-80 (TLCTELVLSDCMLSEEGATLLLR), 87-107 (VLRFLDLKGNNLRAAGAEALG), 115-136 (SIQSLTLEWNSLGTWDDAFATF), 145-166 (ALQRLDLRNNQISHKGAEELAL), 173-194 (TLQQLDLRWNNVGLLGGRALMN), and 201-212 (TLWRLDLAGNNI). A coiled-coil region spans residues 252–645 (REEKSKQFLD…IARIRDEEAQ (394 aa)). A Phosphoserine; by NEK2 modification is found at Ser-661.

As to quaternary structure, homomer. Interacts with CROCC/rootletin and CEP250. Interacts with CEP44. Interacts with CCDC102B (via N-terminus). In terms of processing, phosphorylated by NEK2 during misosis, phosphorylation reduces centrosomal localization which subsequently leads to centrosome separation.

The protein resides in the cytoplasm. It localises to the cytoskeleton. Its subcellular location is the microtubule organizing center. It is found in the centrosome. Functionally, component of the proteinaceous fiber-like linker between two centrioles, required for centrosome cohesion. The chain is Leucine-rich repeat-containing protein 45 (LRRC45) from Homo sapiens (Human).